The primary structure comprises 334 residues: N-acetyl-gamma-glutamyl-phosphate reductase (334 aa).

The active site involves Cys-145. The interval Gly-173 to Gln-192 is disordered.

It belongs to the NAGSA dehydrogenase family. Type 1 subfamily.

It is found in the cytoplasm. The catalysed reaction is N-acetyl-L-glutamate 5-semialdehyde + phosphate + NADP(+) = N-acetyl-L-glutamyl 5-phosphate + NADPH + H(+). Its pathway is amino-acid biosynthesis; L-arginine biosynthesis; N(2)-acetyl-L-ornithine from L-glutamate: step 3/4. In terms of biological role, catalyzes the NADPH-dependent reduction of N-acetyl-5-glutamyl phosphate to yield N-acetyl-L-glutamate 5-semialdehyde. In Methanocella arvoryzae (strain DSM 22066 / NBRC 105507 / MRE50), this protein is N-acetyl-gamma-glutamyl-phosphate reductase.